Here is a 277-residue protein sequence, read N- to C-terminus: 5-formyltetrahydrofolate cyclo-ligase, mitochondrial (277 aa).

A mitochondrion-targeting transit peptide spans 1-48 (MIGARVFCITTTALRRSPIFFFPKIPTRPVFRLSPATRPIVAMSTTSK). 60–64 (KRVVR) is an ATP binding site. Substrate is bound by residues glutamate 113 and 207 to 211 (RGGGY). Residues 206–213 (GRGGGYYD) and aspartate 254 contribute to the ATP site.

This sequence belongs to the 5-formyltetrahydrofolate cyclo-ligase family. Monomer.

The protein resides in the mitochondrion. It catalyses the reaction (6S)-5-formyl-5,6,7,8-tetrahydrofolate + ATP = (6R)-5,10-methenyltetrahydrofolate + ADP + phosphate. Its function is as follows. Contributes to tetrahydrofolate metabolism and photorespiration through the regulation of serine hydroxymethyltransferase. Prefers the pentalutamyl to the monoglutamyl form of 5-formyltetrahydrofolate. This chain is 5-formyltetrahydrofolate cyclo-ligase, mitochondrial (5FCL), found in Arabidopsis thaliana (Mouse-ear cress).